A 365-amino-acid chain; its full sequence is Potassium channel subfamily K member 9 (365 aa).

The Cytoplasmic portion of the chain corresponds to 1–8 (MKKQNVRT). Residues 9 to 29 (LSLIACTFTYLLVGAAVFDAL) form a helical membrane-spanning segment. Residues 30–88 (ESDHEMREEEKLKAEEIRIRGKYNISTEDYRQLELVILQSEPHRAGVQWKFAGSFYFAI) lie on the Extracellular side of the membrane. Residue N53 is glycosylated (N-linked (GlcNAc...) asparagine). An intramembrane region (pore-forming) is located at residues 89-101 (TVITTIGYGHAAP). Residues T93, I94, G95, and Y96 each coordinate K(+). The selectivity filter 1 stretch occupies residues 93-98 (TIGYGH). Over 102 to 107 (GTDAGK) the chain is Extracellular. Residues 108–128 (AFCMFYAVLGIPLTLVMFQSL) traverse the membrane as a helical segment. Residues 129-158 (GERMNTFVRYLLKRIKKCCGMRNTEVSMEN) lie on the Cytoplasmic side of the membrane. The chain crosses the membrane as a helical span at residues 159–179 (MVTVGFFSCMGTLCIGAAAFS). Residues 180-194 (QCEEWSFFHAYYYCF) are Extracellular-facing. The segment at residues 195 to 207 (ITLTTIGFGDYVA) is an intramembrane region (pore-forming). Positions 199, 200, 201, and 202 each coordinate K(+). The tract at residues 199 to 204 (TIGFGD) is selectivity filter 2. Topologically, residues 208–218 (LQSKGALQRKP) are extracellular. The helical transmembrane segment at 219 to 239 (FYVAFSFMYILVGLTVIGAFL) threads the bilayer. At 240–365 (NLVVLRFLTM…HRLMLRRKSV (126 aa)) the chain is on the cytoplasmic side. The segment at 243–248 (VLRFLT) is X-gate.

It belongs to the two pore domain potassium channel (TC 1.A.1.8) family. Homodimer. Heterodimer with KCNK1. Heterodimer with KCNK3. Highly expressed in the brain.

The protein localises to the cell membrane. Its subcellular location is the mitochondrion inner membrane. The protein resides in the cell projection. It localises to the dendrite. The catalysed reaction is K(+)(in) = K(+)(out). The enzyme catalyses Na(+)(in) = Na(+)(out). With respect to regulation, inhibited by extracellular acidification. Its function is as follows. K(+) channel that conducts voltage-dependent outward rectifying currents upon membrane depolarization. Voltage sensing is coupled to K(+) electrochemical gradient in an 'ion flux gating' mode where outward but not inward ion flow opens the gate. Changes ion selectivity and becomes permeable to Na(+) ions in response to extracellular acidification. Protonation of the pH sensor His-98 stabilizes C-type inactivation conformation likely converting the channel from outward K(+)-conducting, to inward Na(+)-conducting to nonconductive state. Homo- and heterodimerizes to form functional channels with distinct regulatory and gating properties. Allows K(+) currents with fast-gating kinetics important for the repolarization and hyperpolarization phases of action potentials. In granule neurons, hyperpolarizes the resting membrane potential to limit intrinsic neuronal excitability, but once the action potential threshold is reached, supports high-frequency action potential firing and increased neuronal excitability. Homomeric and/or heteromeric KCNK3:KCNK9 channels operate in cerebellar granule cells, whereas heteromeric KCNK1:KCNK9 enables currents in hippocampal dentate gyrus granule neurons. Dispensable for central chemosensory respiration i.e. breathing controlled by brainstem CO2/pH, it rather conducts pH-sensitive currents and controls the firing rate of serotonergic raphe neurons involved in potentiation of the respiratory chemoreflex. In retinal ganglion cells, mediates outward rectifying currents that regulate action potentials in response to acidification of the synaptic cleft. Involved in transmission of image-forming and nonimage-forming visual information in the retina. In adrenal gland, contributes to the maintenance of a hyperpolarized resting membrane potential of aldosterone-producing cells at zona glomerulosa and limits aldosterone release as part of a regulatory mechanism that controls arterial blood pressure and electrolyte homeostasis. This chain is Potassium channel subfamily K member 9 (KCNK9), found in Cavia porcellus (Guinea pig).